A 687-amino-acid polypeptide reads, in one-letter code: Chloride channel protein ClC-Kb (687 aa).

Residues 1–50 (MEELVGLREGASKKPVPLQELWGPCPRIRRNIQGGLEWLKERLFRVGEDW) are Cytoplasmic-facing. 2 helical membrane-spanning segments follow: residues 51–82 (YFLV…KWLY) and 91–111 (LRYL…SGFS). The helical intramembrane region spans 116 to 127 (PSSGGSGIPEVK). S121 serves as a coordination point for chloride. Transmembrane regions (helical) follow at residues 141 to 160 (IKNF…TGST) and 161 to 180 (IFLG…AAYL). Positions 203 to 224 (AGAAVGVATVFAAPISGVLFSI) form an intramembrane region, helical. A helical membrane pass occupies residues 236–255 (YWRGFFAATCGAFMFHLLAV). Ca(2+)-binding residues include E259, E261, D278, and E281. The next 2 membrane-spanning stretches (helical) occupy residues 282–310 (IFFF…LFFL) and 325–342 (PLYS…TYPP). The segment at residues 349-360 (ASRLSMSEHLET) is an intramembrane region (helical). Transmembrane regions (helical) follow at residues 400–420 (GTLV…TTIP) and 421–440 (IPAG…GRLF). Position 426 (F426) interacts with chloride. An intramembrane region (helical) is located at residues 464-496 (GAYALAGAAAFSGAVTHTLSTALLAFEVTGQLV). Residues 500-520 (PVLMAVLAANAISQSFQPSFY) form a helical membrane-spanning segment. Topologically, residues 521 to 687 (DGTIIVKKLP…STLTNPPAPK (167 aa)) are cytoplasmic. 2 CBS domains span residues 551–609 (MNCA…EPAS) and 626–687 (CPTQ…PAPK).

This sequence belongs to the chloride channel (TC 2.A.49) family. CLCNKB subfamily. In terms of assembly, homodimer. Interacts with BSND. N-glycosylated. As to expression, specifically expressed in the kidney, predominantly in the outer medulla and cortex. All nephron segments expressing BSND also express CLCNK proteins.

It localises to the basolateral cell membrane. It catalyses the reaction chloride(in) = chloride(out). The catalysed reaction is iodide(out) = iodide(in). It carries out the reaction nitrate(in) = nitrate(out). The enzyme catalyses bromide(in) = bromide(out). In terms of biological role, anion-selective channel permeable to small monovalent anions with ion selectivity for chloride &gt; bromide &gt; nitrate &gt; iodide. Forms a homodimeric channel where each subunit has its own ion conduction pathway. May conduct double-barreled currents controlled by two types of gates, two fast gates that control each subunit independently and a slow common gate that opens and shuts off both subunits simultaneously. Assembles with the regulatory subunit BSND/Barttin for sorting at the basolateral plasma membrane domain and functional switch to the ion conducting state. CLCNKB:BSND channels display mostly a linear current-voltage relationship controlled by common gate. Mediates chloride conductance along nephron segments, namely the thick ascending limb of Henle's loop, convoluted tubule and the collecting duct, contributing to the maintenance of systemic acid-base and electrolyte homeostasis. Conducts chloride currents in the stria vascularis of the inner ear to establish the endocochlear potential necessary for normal hearing. The sequence is that of Chloride channel protein ClC-Kb from Mus musculus (Mouse).